We begin with the raw amino-acid sequence, 226 residues long: ATP-dependent dethiobiotin synthetase BioD (226 aa).

Residue 12–17 coordinates ATP; the sequence is GVGKTV. Mg(2+) is bound at residue Thr-16. Lys-37 is a catalytic residue. Thr-41 is a binding site for substrate. Residues Asp-49, 108 to 111, and 169 to 170 each bind ATP; these read EGAG and GS. Mg(2+)-binding residues include Asp-49 and Glu-108.

Belongs to the dethiobiotin synthetase family. In terms of assembly, homodimer. The cofactor is Mg(2+).

It localises to the cytoplasm. It carries out the reaction (7R,8S)-7,8-diammoniononanoate + CO2 + ATP = (4R,5S)-dethiobiotin + ADP + phosphate + 3 H(+). The protein operates within cofactor biosynthesis; biotin biosynthesis; biotin from 7,8-diaminononanoate: step 1/2. In terms of biological role, catalyzes a mechanistically unusual reaction, the ATP-dependent insertion of CO2 between the N7 and N8 nitrogen atoms of 7,8-diaminopelargonic acid (DAPA, also called 7,8-diammoniononanoate) to form a ureido ring. In Mycobacterium marinum (strain ATCC BAA-535 / M), this protein is ATP-dependent dethiobiotin synthetase BioD.